Here is a 190-residue protein sequence, read N- to C-terminus: Crossover junction endodeoxyribonuclease RuvC (190 aa).

Catalysis depends on residues Asp-8, Glu-67, and Asp-139. Mg(2+) is bound by residues Asp-8, Glu-67, and Asp-139.

The protein belongs to the RuvC family. In terms of assembly, homodimer which binds Holliday junction (HJ) DNA. The HJ becomes 2-fold symmetrical on binding to RuvC with unstacked arms; it has a different conformation from HJ DNA in complex with RuvA. In the full resolvosome a probable DNA-RuvA(4)-RuvB(12)-RuvC(2) complex forms which resolves the HJ. Mg(2+) is required as a cofactor.

Its subcellular location is the cytoplasm. The enzyme catalyses Endonucleolytic cleavage at a junction such as a reciprocal single-stranded crossover between two homologous DNA duplexes (Holliday junction).. The RuvA-RuvB-RuvC complex processes Holliday junction (HJ) DNA during genetic recombination and DNA repair. Endonuclease that resolves HJ intermediates. Cleaves cruciform DNA by making single-stranded nicks across the HJ at symmetrical positions within the homologous arms, yielding a 5'-phosphate and a 3'-hydroxyl group; requires a central core of homology in the junction. The consensus cleavage sequence is 5'-(A/T)TT(C/G)-3'. Cleavage occurs on the 3'-side of the TT dinucleotide at the point of strand exchange. HJ branch migration catalyzed by RuvA-RuvB allows RuvC to scan DNA until it finds its consensus sequence, where it cleaves and resolves the cruciform DNA. The chain is Crossover junction endodeoxyribonuclease RuvC from Haemophilus influenzae (strain 86-028NP).